Reading from the N-terminus, the 1058-residue chain is UPF0507 protein YALI0E18612g (1058 aa).

Residues 252 to 394 (TNEDGPLDQA…IGENREQLEA (143 aa)) enclose the VPS9 domain.

This sequence belongs to the UPF0507 family.

This Yarrowia lipolytica (strain CLIB 122 / E 150) (Yeast) protein is UPF0507 protein YALI0E18612g.